Reading from the N-terminus, the 620-residue chain is Acetylcholinesterase 1 (620 aa).

Residues 1 to 31 (MRYSLLFFIFLPCVITAVDLIHLHDGSPLFG) form the signal peptide. N74 carries N-linked (GlcNAc...) asparagine glycosylation. C82 and C109 are disulfide-bonded. The active-site Acyl-ester intermediate is S216. C270 and C286 are joined by a disulfide. N272 carries an N-linked (GlcNAc...) asparagine glycan. Active-site charge relay system residues include E346 and H468. C430 and C558 form a disulfide bridge. N486 and N536 each carry an N-linked (GlcNAc...) asparagine glycan.

The protein belongs to the type-B carboxylesterase/lipase family. As to quaternary structure, oligomer composed of disulfide-linked homodimers.

It is found in the synapse. It localises to the secreted. The protein localises to the cell membrane. The enzyme catalyses acetylcholine + H2O = choline + acetate + H(+). In terms of biological role, rapidly hydrolyzes choline released into the synapse. The polypeptide is Acetylcholinesterase 1 (ace-1) (Caenorhabditis briggsae).